Consider the following 1181-residue polypeptide: MANSSRSRAILSVNLDAVMANDPLRELFEACKTGEIAKVKKLITPQTVNARDTAGRKSTPLHFAAGYGRREVVEFLLNSGASIQACDEGGLHPLHNCCSFGHAEVVRLLLKAGASPNTTDNWNYTPLHEAASKGKVDVCLALLQHGANHTIRNSEQKTPLELADEATRPVLTGEYRKDELLEAARSGAEDRLLALLTPLNVNCHASDGRRSTPLHLAAGYNRIGIVEILLANGADVHAKDKGGLVPLHNACSYGHFDVTKLLIQAGANVNANDLWAFTPLHEAASKSRVEVCSLLLSRGADPTLLNCHSKSAIDAAPTRELRERIAFEYKGHCLLDACRKCDVSRAKKLVCAEIVNFVHPYTGDTPLHLAVVSPDGKRKQLMELLTRKGSLLNEKNKAFLTPLHLAAELLHYDAMEVLLKQGAKVNALDSLGQTPLHRCARDEQAVRLLLSYAADTNIVSLEGLTAAQLASDSVLKLLKNPPDSETHLLEAAKAGDLDTVRRIVLNNPISVNCRDLDGRHSTPLHFAAGFNRVPVVQFLLEHGAEVYAADKGGLVPLHNACSYGHYEVTELLVKHGANVNVSDLWKFTPLHEAAAKGKYDICKLLLKHGADPMKKNRDGATPADLVKESDHDVAELLRGPSALLDAAKKGNLARVQRLVTPESINCRDAQGRNSTPLHLAAGYNNFECAEYLLENGADVNAQDKGGLIPLHNASSYGHLDIAALLIKHKTVVNATDKWGFTPLHEAAQKGRTQLCSLLLAHGADAYMKNQEGQTPIELATADDVKCLLQDAMATSLSQQALSASTQSLTSSSPAPDATAAAAPGTSSSSSSAILSPTTETVLLPTGASMILSVPVPLPLSSSTRISPAQGAEANGAEGSSSDDLLPDADTITNVSGFLSSQQLHHLIELFEREQITLDILAEMGHDDLKQVGVSAYGFRHKILKGIAQLRSTTGIGNNVNLCTLLVDLLPDDKEFVAVEEEMQATIREHRDNGQAGGYFTRYNIIRVQKVQNRKLWERYAHRRQEIAEENFLQSNERMLFHGSPFINAIVQRGFDERHAYIGGMFGAGIYFAEHSSKSNQYVYGIGGGIGCPSHKDKSCYVCPRQLLLCRVALGKSFLQYSAMKMAHAPPGHHSVVGRPSAGGLHFAEYVVYRGEQSYPEYLITYQIVKPDDSSSGTEDTR.

ANK repeat units lie at residues 56–85 (RKST…SIQA), 89–118 (GGLH…SPNT), 122–151 (WNYT…NHTI), 209–238 (RRST…DVHA), 242–271 (GGLV…NVNA), 275–304 (WAFT…DPTL), 362–394 (TGDT…LLNE), 398–427 (AFLT…KVNA), 431–458 (LGQT…DTNI), 483–513 (DSET…SVNC), 519–548 (RHST…EVYA), 552–581 (GGLV…NVNV), 585–614 (WKFT…DPMK), 638–668 (RGPS…NCRD), 672–701 (RNST…DVNA), 705–734 (GGLI…VVNA), 738–767 (WGFT…DAYM), and 771–799 (EGQT…LSQQ). 2 disordered regions span residues 807-834 (SLTS…SAIL) and 864-886 (RISP…DLLP). Residues 889–952 (DTITNVSGFL…LKGIAQLRST (64 aa)) enclose the SAM domain. Residues 969 to 1174 (LPDDKEFVAV…YQIVKPDDSS (206 aa)) enclose the PARP catalytic domain. Residues Cys-1091, His-1094, Cys-1099, and Cys-1102 each coordinate Zn(2+).

Belongs to the ARTD/PARP family. As to quaternary structure, interacts (via ANK repeats) with PI31.

It catalyses the reaction NAD(+) + (ADP-D-ribosyl)n-acceptor = nicotinamide + (ADP-D-ribosyl)n+1-acceptor + H(+).. The catalysed reaction is L-aspartyl-[protein] + NAD(+) = 4-O-(ADP-D-ribosyl)-L-aspartyl-[protein] + nicotinamide. The enzyme catalyses L-glutamyl-[protein] + NAD(+) = 5-O-(ADP-D-ribosyl)-L-glutamyl-[protein] + nicotinamide. Functionally, stimulates proteasome activity, probably by ADP-ribosylation of PI31. Modulates 26S proteasome assembly. This chain is Poly [ADP-ribose] polymerase tankyrase, found in Drosophila melanogaster (Fruit fly).